The chain runs to 681 residues: UvrABC system protein C (681 aa).

Residues Asp16–Val95 form the GIY-YIG domain. Residues Gly208–Ala243 enclose the UVR domain. A disordered region spans residues Glu650 to Thr681. The span at Thr660–Thr672 shows a compositional bias: polar residues.

This sequence belongs to the UvrC family. Interacts with UvrB in an incision complex.

It localises to the cytoplasm. Its function is as follows. The UvrABC repair system catalyzes the recognition and processing of DNA lesions. UvrC both incises the 5' and 3' sides of the lesion. The N-terminal half is responsible for the 3' incision and the C-terminal half is responsible for the 5' incision. The protein is UvrABC system protein C of Streptomyces avermitilis (strain ATCC 31267 / DSM 46492 / JCM 5070 / NBRC 14893 / NCIMB 12804 / NRRL 8165 / MA-4680).